Consider the following 586-residue polypeptide: Phosphomethylpyrimidine synthase (586 aa).

Residues 1-58 (MKQSVSAEQIELKSSLPGSKKVYVDGTREGMKVPMREIEQSDTNGVQNPPIRVYDTSG) are disordered. A compositionally biased stretch (basic and acidic residues) spans 22-39 (VYVDGTREGMKVPMREIE). Substrate is bound by residues asparagine 193, methionine 222, tyrosine 251, histidine 287, 307-309 (SRG), 348-351 (DGLR), and glutamate 387. Residue histidine 391 participates in Zn(2+) binding. Residue tyrosine 414 participates in substrate binding. Histidine 455 lines the Zn(2+) pocket. [4Fe-4S] cluster is bound by residues cysteine 535, cysteine 538, and cysteine 543.

Belongs to the ThiC family. Requires [4Fe-4S] cluster as cofactor.

It catalyses the reaction 5-amino-1-(5-phospho-beta-D-ribosyl)imidazole + S-adenosyl-L-methionine = 4-amino-2-methyl-5-(phosphooxymethyl)pyrimidine + CO + 5'-deoxyadenosine + formate + L-methionine + 3 H(+). It functions in the pathway cofactor biosynthesis; thiamine diphosphate biosynthesis. In terms of biological role, catalyzes the synthesis of the hydroxymethylpyrimidine phosphate (HMP-P) moiety of thiamine from aminoimidazole ribotide (AIR) in a radical S-adenosyl-L-methionine (SAM)-dependent reaction. The sequence is that of Phosphomethylpyrimidine synthase from Bacillus mycoides (strain KBAB4) (Bacillus weihenstephanensis).